We begin with the raw amino-acid sequence, 223 residues long: Ras-related protein Rab-21 (223 aa).

Ala-2 is modified (N-acetylalanine). Gly-26, Gly-29, Lys-30, Thr-31, Ser-32, Asn-43, Asp-44, His-46, Thr-48, and Thr-49 together coordinate GTP. Thr-31 provides a ligand contact to Mg(2+). The Switch 1 signature appears at 41–54 (KFNDKHITTLQASF). Mg(2+) contacts are provided by Thr-49 and Asp-72. Positions 74-92 (AGQERFHALGPIYYRDSNG) match the Switch 2 motif. Residues Gly-75, Asn-130, Lys-131, Asp-133, Ala-161, and Lys-162 each contribute to the GTP site. Residues Cys-219 and Cys-220 are each lipidated (S-geranylgeranyl cysteine). A Cysteine methyl ester modification is found at Cys-220. Residues 221 to 223 (SSG) constitute a propeptide, removed in mature form.

The protein belongs to the small GTPase superfamily. Rab family. Interacts with the cytoplasmic tail of integrins ITGA1, ITGA2, ITGA5, ITGA6, ITGA11 and ITGB1; this interaction is dependent upon its GDP/GTP cycle. Interacts with RABGEF1 (via VPS9 domain). Interacts with ANKRD27. Interacts (in GTP-bound form) with VAMP8 in response to starvation; the interaction probably regulates VAMP8 endolysosomal trafficking. Interacts (active GTP-bound form) with TMED10; the interaction is indirect and regulates TMED10 abundance and localization at the Golgi. Requires Mg(2+) as cofactor.

The protein localises to the endoplasmic reticulum membrane. It localises to the golgi apparatus. Its subcellular location is the trans-Golgi network. It is found in the golgi apparatus membrane. The protein resides in the early endosome membrane. The protein localises to the cytoplasmic vesicle membrane. It localises to the cleavage furrow. Its subcellular location is the cell projection. It is found in the neuron projection. The catalysed reaction is GTP + H2O = GDP + phosphate + H(+). Regulated by guanine nucleotide exchange factors (GEFs) including ANKRD27 and RABGEF1, which promote the exchange of bound GDP for free GTP. Regulated by GTPase activating proteins (GAPs) which increase the GTP hydrolysis activity. Inhibited by GDP dissociation inhibitors (GDIs). Functionally, the small GTPases Rab are key regulators of intracellular membrane trafficking, from the formation of transport vesicles to their fusion with membranes. Rabs cycle between an inactive GDP-bound form and an active GTP-bound form that is able to recruit to membranes different sets of downstream effectors directly responsible for vesicle formation, movement, tethering and fusion. RAB21 is involved in membrane trafficking control. Regulates integrin internalization and recycling, but does not influence the traffic of endosomally translocated receptors in general. As a result, may regulate cell adhesion and migration. During the mitosis of adherent cells, controls the endosomal trafficking of integrins which is required for the successful completion of cytokinesis. Involved in neurite growth. Following SBF2/MTMT13-mediated activation in response to starvation-induced autophagy, binds to and regulates SNARE protein VAMP8 endolysosomal transport required for SNARE-mediated autophagosome-lysosome fusion. Modulates protein levels of the cargo receptors TMED2 and TMED10, and required for appropriate Golgi localization of TMED10. The protein is Ras-related protein Rab-21 of Rattus norvegicus (Rat).